The following is a 214-amino-acid chain: Tungstate uptake system ATP-binding protein TupC (214 aa).

In terms of domain architecture, ABC transporter spans 3-214 (ITVSNLKKSY…GRVGEADGFF (212 aa)). 35–42 (GPNGAGKT) contributes to the ATP binding site.

The protein belongs to the ABC transporter superfamily. In terms of assembly, the complex is composed of two ATP-binding proteins (TupC), two transmembrane proteins (TupB) and a solute-binding protein (TupA).

It carries out the reaction tungstate(in) + ATP + H2O = tungstate(out) + ADP + phosphate + H(+). Its function is as follows. Part of an ABC transporter complex involved in tungstate uptake. Probably responsible for energy coupling to the transport system. The sequence is that of Tungstate uptake system ATP-binding protein TupC from Peptoclostridium acidaminophilum (Eubacterium acidaminophilum).